The following is a 346-amino-acid chain: Probable RNA methyltransferase Pmen_2155 (346 aa).

Residue Glu-91 is the Proton acceptor of the active site. One can recognise a Radical SAM core domain in the interval 94–320; that stretch reads LLPRDGLCIS…TKVRNSAGQD (227 aa). A disulfide bond links Cys-101 and Cys-325. 3 residues coordinate [4Fe-4S] cluster: Cys-108, Cys-112, and Cys-115. S-adenosyl-L-methionine contacts are provided by residues 153–154, Ser-183, 206–208, and Asn-282; these read GE and SLH. The S-methylcysteine intermediate role is filled by Cys-325.

This sequence belongs to the radical SAM superfamily. RlmN family. Requires [4Fe-4S] cluster as cofactor.

It is found in the cytoplasm. This chain is Probable RNA methyltransferase Pmen_2155, found in Ectopseudomonas mendocina (strain ymp) (Pseudomonas mendocina).